Here is a 4481-residue protein sequence, read N- to C-terminus: Dynein axonemal heavy chain 17 (4481 aa).

Residues 1-1792 (MPDLRIDYLE…FANICDAQIK (1792 aa)) are stem. Residues 521–569 (LLYMCGGLLERPLILVEVVPRYSVMLEMFNTELDNAKLMYDAQMAASAD) form a Kelch 1 repeat. Residues 759–826 (ENVMEYIQEM…GRVANLNKRY (68 aa)) adopt a coiled-coil conformation. 2 TPR repeats span residues 1533–1566 (VVEATNKPDLYNKLENLKMSLAVCEKALAEYLET) and 1688–1722 (IWWTTEVGLAFARLEEGYENAIKDYNKKQISQLNA). AAA stretches follow at residues 1793–2014 (YSYE…VLVV), 2074–2295 (KIIK…IGFK), 2401–2649 (ELDP…IFQG), and 2747–2996 (SYNE…ERRY). ATP-binding positions include 1831-1838 (GPAGTGKT) and 2112-2119 (GNAGSGKS). One copy of the Kelch 2 repeat lies at 2229–2275 (ISHLRTATPATVSRAGILYINPADLGWNPVVSSWIERRKVQSEKANL). ATP-binding positions include 2439-2446 (GNAGTGKS) and 2785-2792 (GVGGSGKQ). A Kelch 3 repeat occupies 2782 to 2834 (LLVGVGGSGKQSLSRLAAYISALDVFQITLKKGYAIPDLKMDLATQYIKSAVK). Coiled coils occupy residues 3011-3071 (YQNL…IQVV) and 3241-3293 (DVAP…EKIK). The segment at 3011–3297 (YQNLLAKKRM…TAEKIKCQQE (287 aa)) is stalk. AAA stretches follow at residues 3389 to 3616 (LTDD…EIEE) and 3826 to 4059 (VKNF…VLYN). The TPR 3 repeat unit spans residues 4138 to 4173 (PESPYLYGLHPNAEIGFLTVTSEKLFRTVLEMQPKE). Kelch repeat units lie at residues 4272–4321 (NLGL…DLLQ) and 4339–4385 (VWLA…DMTA).

This sequence belongs to the dynein heavy chain family. As to quaternary structure, consists of at least two heavy chains and a number of intermediate and light chains.

The protein resides in the cytoplasm. Its subcellular location is the cytoskeleton. It localises to the flagellum axoneme. In terms of biological role, force generating protein component of the outer dynein arms (ODAs) in the sperm flagellum. Produces force towards the minus ends of microtubules. Dynein has ATPase activity; the force-producing power stroke is thought to occur on release of ADP. Plays a major role in sperm motility, implicated in sperm flagellar assembly and beating. The chain is Dynein axonemal heavy chain 17 from Mus musculus (Mouse).